The sequence spans 790 residues: Probable copper-transporting ATPase SynA (790 aa).

The Cytoplasmic portion of the chain corresponds to 1–105 (MPAAIVHSAD…IPPLQQQRLQ (105 aa)). Residues 14–81 (TSILVEVEGM…EITGLGFRAQ (68 aa)) enclose the HMA domain. The Cu(+) site is built by Cys-25 and Cys-28. Residues 106 to 127 (LAIAAFLLIVSSWGHLGHWLDH) form a helical membrane-spanning segment. Topologically, residues 128–136 (PLPGTDQLW) are extracellular. The helical transmembrane segment at 137–156 (FHALLATWALLGPGRSILQA) threads the bilayer. The Cytoplasmic portion of the chain corresponds to 157–163 (GWQGLRC). A helical transmembrane segment spans residues 164-184 (GAPNMNSLVLLGTGSAYLASL). At 185-198 (VALLWPQLGWVCFF) the chain is on the extracellular side. A helical membrane pass occupies residues 199–219 (DEPVMLLGFILLGRTLEEQAR). Topologically, residues 220-358 (FRSQAALQNL…KAPVQRFADA (139 aa)) are cytoplasmic. A helical transmembrane segment spans residues 359–381 (IAGRFVYGVCAIAALTFGFWATL). Topologically, residues 382–420 (GSRWWPQVLQQPLPGLLIHAPHHGMEMAHPHSHSPLLLA) are extracellular. The chain crosses the membrane as a helical span at residues 421-438 (LTLAISVLVVACPCALGL). Residues 439-723 (ATPTAILVAT…NLSQMGLRTI (285 aa)) are Cytoplasmic-facing. Asp-476 acts as the 4-aspartylphosphate intermediate in catalysis. Asp-669 and Asp-673 together coordinate Mg(2+). The helical transmembrane segment at 724 to 743 (RQNLTWALGYNVVMLPLAAG) threads the bilayer. Residues 744–755 (AFLPAYGLALTP) lie on the Extracellular side of the membrane. The chain crosses the membrane as a helical span at residues 756–774 (AIAGACMAVSSLAVVSNSL). The Cytoplasmic segment spans residues 775 to 790 (LLRYWFRRSLNHSVSV).

The protein belongs to the cation transport ATPase (P-type) (TC 3.A.3) family. Type IB subfamily.

The protein resides in the cell membrane. It carries out the reaction Cu(+)(in) + ATP + H2O = Cu(+)(out) + ADP + phosphate + H(+). Involved in copper transport. The chain is Probable copper-transporting ATPase SynA (synA) from Synechococcus elongatus (strain ATCC 33912 / PCC 7942 / FACHB-805) (Anacystis nidulans R2).